Here is a 337-residue protein sequence, read N- to C-terminus: Tetraacyldisaccharide 4'-kinase (337 aa).

ATP is bound at residue 72 to 79; sequence TVGGSGKT.

Belongs to the LpxK family.

It catalyses the reaction a lipid A disaccharide + ATP = a lipid IVA + ADP + H(+). The protein operates within glycolipid biosynthesis; lipid IV(A) biosynthesis; lipid IV(A) from (3R)-3-hydroxytetradecanoyl-[acyl-carrier-protein] and UDP-N-acetyl-alpha-D-glucosamine: step 6/6. Its function is as follows. Transfers the gamma-phosphate of ATP to the 4'-position of a tetraacyldisaccharide 1-phosphate intermediate (termed DS-1-P) to form tetraacyldisaccharide 1,4'-bis-phosphate (lipid IVA). The sequence is that of Tetraacyldisaccharide 4'-kinase from Shewanella sediminis (strain HAW-EB3).